The chain runs to 226 residues: MNHFSKFSVTKRLLILEVLFSAISFGISIYIKVFGRSSIVTFFLLCFHLVPNALFLFPWTIITTSFVDANVFTLLSSILILSVYGVEIERSWGHKEYLLFCQFLTVIPNIAVLIPCFIAYKITDSHYLLVAIIQSTTAIQAGILTAWYQLYSCKKEESSNKFLCPLSKYLIYLFLSIHLFYVFQSFPWTYFCLAVSGTCISELYVLFVHPVVQELFHLESHTQLPI.

Residues 1–26 (MNHFSKFSVTKRLLILEVLFSAISFG) form the signal peptide. Residues 27 to 41 (ISIYIKVFGRSSIVT) are Extracellular-facing. Residues 42–62 (FFLLCFHLVPNALFLFPWTII) form a helical membrane-spanning segment. Residues 63–65 (TTS) are Cytoplasmic-facing. A helical transmembrane segment spans residues 66-86 (FVDANVFTLLSSILILSVYGV). At 87 to 97 (EIERSWGHKEY) the chain is on the extracellular side. Residues 98 to 118 (LLFCQFLTVIPNIAVLIPCFI) traverse the membrane as a helical segment. Topologically, residues 119 to 191 (AYKITDSHYL…VFQSFPWTYF (73 aa)) are cytoplasmic. Residues 192–212 (CLAVSGTCISELYVLFVHPVV) traverse the membrane as a helical segment. The Extracellular portion of the chain corresponds to 213–226 (QELFHLESHTQLPI).

It is found in the membrane. This is Protein pdh1 (pdh1) from Schizosaccharomyces pombe (strain 972 / ATCC 24843) (Fission yeast).